The chain runs to 615 residues: Increased rDNA silencing protein 4 (615 aa).

Disordered stretches follow at residues 38 to 135, 152 to 260, 277 to 304, and 323 to 445; these read SNEV…SSHS, LLGI…NRSQ, PSIASSNTTTTTSNQGSGLPNLVPNYSS, and KPKH…NEDK. Positions 50–65 are enriched in polar residues; that stretch reads VSRNPQTRLSEPSLQK. Composition is skewed to low complexity over residues 121-135 and 157-168; these read HSQSKLSSDNNSSHS and SRSSSRNGSNES. At Ser-180 the chain carries Phosphoserine. A compositionally biased stretch (low complexity) spans 184 to 198; that stretch reads LLTSFSSGRRLSSSS. Residues 248–260 show a composition bias toward polar residues; the sequence is NPDTSDVISNRSQ. Residues 281-290 are compositionally biased toward low complexity; the sequence is SSNTTTTTSN. Basic and acidic residues predominate over residues 365-377; the sequence is ENDHASSLHEGNL. Residues 389 to 402 are compositionally biased toward acidic residues; the sequence is DVYDDTDSDSESDQ. Residues 409-438 are compositionally biased toward basic residues; that stretch reads KPRKRDRIKRKIRNSANKTAHHRPIHRTRD. Positions 460–571 constitute an EH domain; it reads ERKRYESMWV…QCVWDSVDRY (112 aa).

This sequence belongs to the IRS4 family. In terms of assembly, interacts with INP51.

In terms of biological role, with TAX4, acts as a positive regulator of INP51 activity and phosphatidylinositol 4,5-bisphosphate turnover. Negatively regulates signaling through the cell integrity pathway, including the MAP kinase SLT2. Also seems to be involved in rDNA silencing. The chain is Increased rDNA silencing protein 4 (IRS4) from Saccharomyces cerevisiae (strain ATCC 204508 / S288c) (Baker's yeast).